Here is a 193-residue protein sequence, read N- to C-terminus: dCTP deaminase (193 aa).

DCTP-binding positions include 110–115 (RSSLAR), aspartate 128, 136–138 (VLE), tyrosine 171, lysine 178, and glutamine 182. Glutamate 138 acts as the Proton donor/acceptor in catalysis.

The protein belongs to the dCTP deaminase family. In terms of assembly, homotrimer.

It carries out the reaction dCTP + H2O + H(+) = dUTP + NH4(+). Its pathway is pyrimidine metabolism; dUMP biosynthesis; dUMP from dCTP (dUTP route): step 1/2. Catalyzes the deamination of dCTP to dUTP. The polypeptide is dCTP deaminase (Aeromonas hydrophila subsp. hydrophila (strain ATCC 7966 / DSM 30187 / BCRC 13018 / CCUG 14551 / JCM 1027 / KCTC 2358 / NCIMB 9240 / NCTC 8049)).